A 214-amino-acid polypeptide reads, in one-letter code: Glucose-6-phosphate isomerase (214 aa).

H92, H94, E101, and H140 together coordinate Fe cation.

Belongs to the archaeal-type GPI family. In terms of assembly, homodimer.

The protein localises to the cytoplasm. It carries out the reaction alpha-D-glucose 6-phosphate = beta-D-fructose 6-phosphate. It functions in the pathway carbohydrate degradation; glycolysis; D-glyceraldehyde 3-phosphate and glycerone phosphate from D-glucose: step 2/4. The polypeptide is Glucose-6-phosphate isomerase (Sinorhizobium medicae (strain WSM419) (Ensifer medicae)).